The sequence spans 908 residues: NADH-quinone oxidoreductase subunit G (908 aa).

The region spanning 2–83 (ATIHVDGKEY…GTFISIDDEE (82 aa)) is the 2Fe-2S ferredoxin-type domain. Cys-34, Cys-45, Cys-48, and Cys-67 together coordinate [2Fe-2S] cluster. A 4Fe-4S His(Cys)3-ligated-type domain is found at 83–122 (EAKQFRESVVEWLMTNHPHDCPVCEEGGNCHLQDMTVMTG). Positions 99, 103, 106, 112, 151, 154, 157, 201, 228, 231, 235, and 263 each coordinate [4Fe-4S] cluster. In terms of domain architecture, 4Fe-4S Mo/W bis-MGD-type spans 221-277 (MQFAPSICQQCSIGCNISPGERYGELRRIENRYNGTVNHYFLCDRGRFGYGYVNLKD).

Belongs to the complex I 75 kDa subunit family. Composed of 13 different subunits. Subunits NuoCD, E, F, and G constitute the peripheral sector of the complex. [2Fe-2S] cluster serves as cofactor. Requires [4Fe-4S] cluster as cofactor.

The enzyme catalyses a quinone + NADH + 5 H(+)(in) = a quinol + NAD(+) + 4 H(+)(out). Its function is as follows. NDH-1 shuttles electrons from NADH, via FMN and iron-sulfur (Fe-S) centers, to quinones in the respiratory chain. The immediate electron acceptor for the enzyme in this species is believed to be ubiquinone. Couples the redox reaction to proton translocation (for every two electrons transferred, four hydrogen ions are translocated across the cytoplasmic membrane), and thus conserves the redox energy in a proton gradient. The protein is NADH-quinone oxidoreductase subunit G (nuoG) of Escherichia coli O157:H7.